The following is a 186-amino-acid chain: RNA-free ribonuclease P (186 aa).

The protein belongs to the HARP family.

It catalyses the reaction Endonucleolytic cleavage of RNA, removing 5'-extranucleotides from tRNA precursor.. Its function is as follows. RNA-free RNase P that catalyzes the removal of the 5'-leader sequence from pre-tRNA to produce the mature 5'-terminus. This is RNA-free ribonuclease P from Hydrogenobaculum sp. (strain Y04AAS1).